Reading from the N-terminus, the 3432-residue chain is Genome polyprotein (3432 aa).

An interaction with host EXOC1 region spans residues 2–15 (TKKPGGPGKNRAIN). Over 2 to 109 (TKKPGGPGKN…RKQNKRGGNE (108 aa)) the chain is Cytoplasmic. The tract at residues 37–72 (LLDGRGPVRFVLALITFFKFTALAPTKALLGRWKAV) is hydrophobic; homodimerization of capsid protein C. A propeptide spans 106 to 127 (GGNEGSIMWLASLAVVIAYAGA) (ER anchor for the capsid protein C, removed in mature form by serine protease NS3). Residues 110-130 (GSIMWLASLAVVIAYAGAMKL) traverse the membrane as a helical segment. Topologically, residues 131 to 253 (SNFQGKLLMT…ATRYLMKTEN (123 aa)) are extracellular. The N-linked (GlcNAc...) asparagine; by host glycan is linked to Asn-142. A helical transmembrane segment spans residues 254–274 (WIIRNPGYAFLAATLGWMLGS). Topologically, residues 275–279 (NNGQR) are cytoplasmic. Residues 280-294 (VVFTILLLLVAPAYS) traverse the membrane as a helical segment. Topologically, residues 295-746 (FNCLGMGNRD…QVFGGAFRTL (452 aa)) are extracellular. 6 disulfide bridges follow: Cys-297–Cys-324, Cys-354–Cys-410, Cys-354–Cys-415, Cys-368–Cys-399, Cys-386–Cys-410, and Cys-386–Cys-415. A fusion peptide region spans residues 392 to 405 (DRGWGNGCGLFGKG). Asn-448 is a glycosylation site (N-linked (GlcNAc...) asparagine; by host). 2 disulfides stabilise this stretch: Cys-484/Cys-581 and Cys-598/Cys-629. The helical transmembrane segment at 747–767 (FGGMSWITQGLMGALLLWMGV) threads the bilayer. Residues 768-773 (NARDRS) lie on the Cytoplasmic side of the membrane. The chain crosses the membrane as a helical span at residues 774–794 (IALAFLATGGVLVFLATNVHA). The Extracellular segment spans residues 795 to 1219 (DTGCAIDITR…AFAEANSGGD (425 aa)). Cystine bridges form between Cys-798/Cys-809, Cys-849/Cys-937, Cys-973/Cys-1017, Cys-1074/Cys-1123, Cys-1085/Cys-1106, and Cys-1107/Cys-1110. 2 N-linked (GlcNAc...) asparagine; by host glycosylation sites follow: Asn-924 and Asn-1001. The chain crosses the membrane as a helical span at residues 1220–1240 (VLHLALIAVFKIQPAFLVMNM). The Cytoplasmic portion of the chain corresponds to 1241 to 1250 (LSTRWTNQEN). The helical transmembrane segment at 1251 to 1271 (VVLVLGAALFQLASVDLQIGV) threads the bilayer. Position 1272 (His-1272) is a topological domain, lumenal. Residues 1273 to 1293 (GILNAAAIAWMIVRAITFPTT) form a helical membrane-spanning segment. Topologically, residues 1294–1309 (SSVTMPVLALLTPGMR) are cytoplasmic. The helical transmembrane segment at 1310–1330 (ALYLDTYRIILLVIGICSLLQ) threads the bilayer. The Lumenal portion of the chain corresponds to 1331 to 1341 (ERKKTMAKKKG). Residues 1342–1362 (AVLLGLALTSTGWFSPTTIAA) traverse the membrane as a helical segment. The Cytoplasmic portion of the chain corresponds to 1363-1374 (GLMVCNPNKKRG). A helical transmembrane segment spans residues 1375-1395 (WPATEFLSAVGLMFAIVGGLA). The Lumenal segment spans residues 1396–1398 (ELD). A helical transmembrane segment spans residues 1399-1419 (IESMSIPFMLAGLMAVSYVVS). Residues 1420–1476 (GKATDMWLERAADISWEMDAAITGSSRRLDVKLDDDGDFHLIDDPGVPWKVWVLRMS) lie on the Cytoplasmic side of the membrane. The interacts with and activates NS3 protease stretch occupies residues 1427 to 1466 (LERAADISWEMDAAITGSSRRLDVKLDDDGDFHLIDDPGV). The segment at residues 1477–1497 (CIGLAALTPWAIVPAAFGYWL) is an intramembrane region (helical). The Cytoplasmic portion of the chain corresponds to 1498-2173 (TLKTTKRGGV…RMALEELPDA (676 aa)). The region spanning 1505–1682 (GGVFWDTPSP…DRQEEPVPEA (178 aa)) is the Peptidase S7 domain. Catalysis depends on charge relay system; for serine protease NS3 activity residues His-1555, Asp-1579, and Ser-1639. The Helicase ATP-binding domain occupies 1685 to 1841 (PNMLRKRQMT…DSNAPIHDLQ (157 aa)). Residues 1689–1692 (RKRQ) form an important for RNA-binding region. An ATP-binding site is contributed by 1698-1705 (LHPGSGKT). The DEAH box motif lies at 1789 to 1792 (DEAH). The Helicase C-terminal domain occupies 1852–2017 (GYEWITEYAG…GLVAQLYGPE (166 aa)). Lys-1893 carries the N6-acetyllysine; by host modification. Residues 1950–1971 (NPSPITSASAAQRRGRVGRNPN) form a disordered region. A regulates the ATPase activity of NS3 helicase region spans residues 2168 to 2172 (EELPD). A helical transmembrane segment spans residues 2174–2194 (LETITLIVAITVMTGGFFLLM). Over 2195-2199 (MQRKG) the chain is Lumenal. An intramembrane region (helical) is located at residues 2200–2220 (IGKMGLGALVLTLATFFLWAA). Position 2221 (Glu-2221) is a topological domain, lumenal. A helical membrane pass occupies residues 2222-2242 (VPGTKIAGTLLIALLLMVVLI). The Cytoplasmic segment spans residues 2243–2257 (PEPEKQRSQTDNQLA). A helical membrane pass occupies residues 2258-2278 (VFLICVLTVVGVVAANEYGML). Topologically, residues 2279–2311 (EKTKADLKSMFVGKTQASGLTGLPSMALDLRPA) are lumenal. An intramembrane region (helical) is located at residues 2312–2332 (TAWALYGGSTVVLTPLLKHLI). The Lumenal portion of the chain corresponds to 2333–2368 (TSEYVTTSLASINSQAGSLFVLPRGVPFTDLDLTVG). The chain crosses the membrane as a helical span at residues 2369–2389 (LVFLGCWGQITLTTFLTAMVL). Residues 2390–2444 (ATLHYGYMLPGWQAEALRAAQRRTAAGIMKNAVVDGMVATDVPELERTTPLMQKK) lie on the Cytoplasmic side of the membrane. Residues 2445-2465 (VGQVLLIGVSVAAFLVNPNVT) traverse the membrane as a helical segment. Over 2466 to 2469 (TVRE) the chain is Lumenal. A helical membrane pass occupies residues 2470–2490 (AGVLVTAATLTLWDNGASAVW). Over 2491–3432 (NSTTATGLCH…DVLIQEDRVI (942 aa)) the chain is Cytoplasmic. Positions 2528 to 2793 (GRPGGRTLGE…DVNLGSGTRA (266 aa)) constitute an mRNA cap 0-1 NS5-type MT domain. Ser-2583 contacts S-adenosyl-L-methionine. Ser-2583 is subject to Phosphoserine. Catalysis depends on Lys-2588, which acts as the For 2'-O-MTase activity. Gly-2613, Trp-2614, Thr-2631, Lys-2632, Asp-2658, and Val-2659 together coordinate S-adenosyl-L-methionine. Catalysis depends on Asp-2673, which acts as the For 2'-O-MTase activity. Ile-2674 contributes to the S-adenosyl-L-methionine binding site. Active-site for 2'-O-MTase activity residues include Lys-2709 and Glu-2745. Position 2747 (Tyr-2747) interacts with S-adenosyl-L-methionine. Zn(2+) contacts are provided by Glu-2967, His-2971, Cys-2976, and Cys-2979. The region spanning 3057–3209 (GKMYADDTAG…KPLDDRFATA (153 aa)) is the RdRp catalytic domain. Zn(2+) is bound by residues His-3244, Cys-3260, and Cys-3379.

It in the N-terminal section; belongs to the class I-like SAM-binding methyltransferase superfamily. mRNA cap 0-1 NS5-type methyltransferase family. As to quaternary structure, homodimer. Interacts (via N-terminus) with host EXOC1 (via C-terminus); this interaction results in EXOC1 degradation through the proteasome degradation pathway. Forms heterodimers with envelope protein E in the endoplasmic reticulum and Golgi. In terms of assembly, homodimer; in the endoplasmic reticulum and Golgi. Interacts with protein prM. Interacts with non-structural protein 1. Interacts with host HSPA5. As to quaternary structure, homodimer; Homohexamer when secreted. Interacts with envelope protein E. NS1 interacts with NS4B. Interacts with host complement protein CFH; this interaction leads to the degradation of C3. Interacts (via N-terminus) with serine protease NS3. In terms of assembly, forms a heterodimer with serine protease NS3. May form homooligomers. As to quaternary structure, forms a heterodimer with NS2B. Interacts with non-structural protein 2A (via N-terminus). Interacts with NS4B. Interacts with unphosphorylated RNA-directed RNA polymerase NS5; this interaction stimulates RNA-directed RNA polymerase NS5 guanylyltransferase activity. Interacts with host ILF2. Interacts with serine protease NS3. In terms of assembly, homodimer. Interacts with host STAT2; this interaction inhibits the phosphorylation of the latter, and, when all viral proteins are present (polyprotein), targets STAT2 for degradation. Interacts with serine protease NS3. Mn(2+) is required as a cofactor. It depends on Mg(2+) as a cofactor. Post-translationally, specific enzymatic cleavages in vivo yield mature proteins. Cleavages in the lumen of endoplasmic reticulum are performed by host signal peptidase, whereas cleavages in the cytoplasmic side are performed by serine protease NS3. Signal cleavage at the 2K-4B site requires a prior NS3 protease-mediated cleavage at the 4A-2K site. Cleaved in post-Golgi vesicles by a host furin, releasing the mature small envelope protein M, and peptide pr. This cleavage is incomplete as up to 30% of viral particles still carry uncleaved prM. In terms of processing, N-glycosylated. Post-translationally, N-glycosylated. The excreted form is glycosylated and this is required for efficient secretion of the protein from infected cells. Acetylated by host KAT5. Acetylation modulates NS3 RNA-binding and unwinding activities and plays an important positive role for viral replication. In terms of processing, phosphorylated on serines residues. This phosphorylation may trigger NS5 nuclear localization.

The protein resides in the virion. It is found in the host nucleus. The protein localises to the host cytoplasm. Its subcellular location is the host perinuclear region. It localises to the secreted. The protein resides in the virion membrane. It is found in the host endoplasmic reticulum membrane. The protein localises to the host cell surface. It carries out the reaction Selective hydrolysis of -Xaa-Xaa-|-Yaa- bonds in which each of the Xaa can be either Arg or Lys and Yaa can be either Ser or Ala.. The enzyme catalyses RNA(n) + a ribonucleoside 5'-triphosphate = RNA(n+1) + diphosphate. The catalysed reaction is a ribonucleoside 5'-triphosphate + H2O = a ribonucleoside 5'-diphosphate + phosphate + H(+). It catalyses the reaction ATP + H2O = ADP + phosphate + H(+). It carries out the reaction a 5'-end (5'-triphosphoguanosine)-ribonucleoside in mRNA + S-adenosyl-L-methionine = a 5'-end (N(7)-methyl 5'-triphosphoguanosine)-ribonucleoside in mRNA + S-adenosyl-L-homocysteine. The enzyme catalyses a 5'-end (N(7)-methyl 5'-triphosphoguanosine)-ribonucleoside in mRNA + S-adenosyl-L-methionine = a 5'-end (N(7)-methyl 5'-triphosphoguanosine)-(2'-O-methyl-ribonucleoside) in mRNA + S-adenosyl-L-homocysteine + H(+). In terms of biological role, plays a role in virus budding by binding to the cell membrane and gathering the viral RNA into a nucleocapsid that forms the core of a mature virus particle. During virus entry, may induce genome penetration into the host cytoplasm after hemifusion induced by the surface proteins. Can migrate to the cell nucleus where it modulates host functions. Overcomes the anti-viral effects of host EXOC1 by sequestering and degrading the latter through the proteasome degradation pathway. Its function is as follows. Inhibits RNA silencing by interfering with host Dicer. Prevents premature fusion activity of envelope proteins in trans-Golgi by binding to envelope protein E at pH 6.0. After virion release in extracellular space, gets dissociated from E dimers. Functionally, acts as a chaperone for envelope protein E during intracellular virion assembly by masking and inactivating envelope protein E fusion peptide. prM is the only viral peptide matured by host furin in the trans-Golgi network probably to avoid catastrophic activation of the viral fusion activity in acidic Golgi compartment prior to virion release. prM-E cleavage is inefficient, and many virions are only partially matured. These uncleaved prM would play a role in immune evasion. In terms of biological role, may play a role in virus budding. Exerts cytotoxic effects by activating a mitochondrial apoptotic pathway through M ectodomain. May display a viroporin activity. Its function is as follows. Binds to host cell surface receptor and mediates fusion between viral and cellular membranes. Efficient virus attachment to cell is, at least in part, mediated by host HSPA5. Envelope protein is synthesized in the endoplasmic reticulum in the form of heterodimer with protein prM. They play a role in virion budding in the ER, and the newly formed immature particle is covered with 60 spikes composed of heterodimer between precursor prM and envelope protein E. The virion is transported to the Golgi apparatus where the low pH causes dissociation of PrM-E heterodimers and formation of E homodimers. prM-E cleavage is inefficient, and many virions are only partially matured. These uncleaved prM would play a role in immune evasion. Involved in immune evasion, pathogenesis and viral replication. Once cleaved off the polyprotein, is targeted to three destinations: the viral replication cycle, the plasma membrane and the extracellular compartment. Essential for viral replication. Required for formation of the replication complex and recruitment of other non-structural proteins to the ER-derived membrane structures. Excreted as a hexameric lipoparticle that plays a role against host immune response. Antagonizing the complement function. Binds to the host macrophages and dendritic cells. Inhibits signal transduction originating from Toll-like receptor 3 (TLR3). Functionally, component of the viral RNA replication complex that functions in virion assembly and antagonizes the host alpha/beta interferon antiviral response. In terms of biological role, required cofactor for the serine protease function of NS3. May have membrane-destabilizing activity and form viroporins. Its function is as follows. Displays three enzymatic activities: serine protease, NTPase and RNA helicase. NS3 serine protease, in association with NS2B, performs its autocleavage and cleaves the polyprotein at dibasic sites in the cytoplasm: C-prM, NS2A-NS2B, NS2B-NS3, NS3-NS4A, NS4A-2K and NS4B-NS5. NS3 RNA helicase binds RNA and unwinds dsRNA in the 3' to 5' direction. Regulates the ATPase activity of the NS3 helicase activity. NS4A allows NS3 helicase to conserve energy during unwinding. Functionally, functions as a signal peptide for NS4B and is required for the interferon antagonism activity of the latter. In terms of biological role, induces the formation of ER-derived membrane vesicles where the viral replication takes place. Inhibits interferon (IFN)-induced host STAT1 phosphorylation and nuclear translocation, thereby preventing the establishment of cellular antiviral state by blocking the IFN-alpha/beta pathway. Inhibits STAT2 translocation in the nucleus after IFN-alpha treatment. Its function is as follows. Replicates the viral (+) and (-) RNA genome, and performs the capping of genomes in the cytoplasm. NS5 methylates viral RNA cap at guanine N-7 and ribose 2'-O positions. Besides its role in RNA genome replication, also prevents the establishment of cellular antiviral state by blocking the interferon-alpha/beta (IFN-alpha/beta) signaling pathway. Inhibits host TYK2 and STAT2 phosphorylation, thereby preventing activation of JAK-STAT signaling pathway. The chain is Genome polyprotein from Ardeidae (herons).